The chain runs to 1529 residues: Slit homolog 2 protein (1529 aa).

The first 30 residues, 1 to 30 (MRGVGWQMLSLSLGLVLAILNKVAPQACPA), serve as a signal peptide directing secretion. Residues 31–55 (QCSCSGSTVDCHGLALRSVPRNIPR) enclose the LRRNT domain. 6 LRR repeats span residues 56 to 77 (NTERLDLNGNNITRITKTDFAG), 80 to 101 (HLRVLQLMENKISTIERGAFQD), 104 to 125 (ELERLRLNRNHLQLFPELLFLG), 128 to 149 (KLYRLDLSENQIQAIPRKAFRG), 152 to 173 (DIKNLQLDYNQISCIEDGAFRA), and 176 to 197 (DLEVLTLNNNNITRLSVASFNH). Asn-66 carries an N-linked (GlcNAc...) asparagine glycan. The N-linked (GlcNAc...) asparagine glycan is linked to Asn-186. Residues 209-259 (NNLYCDCHLAWLSDWLRQRPRVGLYTQCMGPSHLRGHNVAEVQKREFVCSG) enclose the LRRCT 1 domain. In terms of domain architecture, LRRNT 2 spans 264–300 (MAPSCSVLHCPAACTCSNNIVDCRGKGLTEIPTNLPE). A disulfide bond links Cys-277 and Cys-286. LRR repeat units lie at residues 301–322 (TITEIRLEQNTIKVIPPGAFSP), 325–346 (KLRRIDLSNNQISELAPDAFQG), 349–370 (SLNSLVLYGNKITELPKSLFEG), 373–394 (SLQLLLLNANKINCLRVDAFQD), and 397–418 (NLNLLSLYDNKLQTIAKGTFSP). Residues 430 to 480 (NPFICDCHLKWLADYLHTNPIETSGARCTSPRRLANKRIGQIKSKKFRCSA) enclose the LRRCT 2 domain. 4 cysteine pairs are disulfide-bonded: Cys-434/Cys-457, Cys-436/Cys-478, Cys-506/Cys-512, and Cys-510/Cys-519. In terms of domain architecture, LRRNT 3 spans 497 to 533 (SGDCFADLACPEKCRCEGTTVDCSNQKLNKIPEHIPQ). LRR repeat units follow at residues 534 to 555 (YTAELRLNNNEFTVLEATGIFK), 559 to 580 (QLRKINFSNNKITDIEEGAFEG), 583 to 604 (GVNEILLTSNRLENVQHKMFKG), 607 to 628 (SLKTLMLRSNRITCVGNDSFIG), and 631 to 652 (SVRLLSLYDNQITTVAPGAFDT). A glycan (N-linked (GlcNAc...) asparagine) is linked at Asn-564. Asn-623 carries an N-linked (GlcNAc...) asparagine glycan. Residues 664 to 714 (NPFNCNCYLAWLGEWLRKKRIVTGNPRCQKPYFLKEIPIQDVAIQDFTCDD) enclose the LRRCT 3 domain. 4 cysteine pairs are disulfide-bonded: Cys-668–Cys-691, Cys-670–Cys-712, Cys-727–Cys-733, and Cys-731–Cys-740. Residues 718-754 (DNSCSPLSRCPTECTCLDTVVRCSNKGLKVLPKGIPR) enclose the LRRNT 4 domain. LRR repeat units lie at residues 755-777 (DVTELYLDGNQFTLVPKELSNYK), 778-799 (HLTLIDLSNNRISTLSNQSFSN), 802-823 (QLLTLILSYNRLRCIPPRTFDG), and 826-847 (SLRLLSLHGNDISVVPEGAFND). Residues Asn-794 and Asn-799 are each glycosylated (N-linked (GlcNAc...) asparagine). An LRRCT 4 domain is found at 859 to 909 (NPLYCDCNMQWLSDWVKSEYKEPGIARCAGPGEMADKLLLTTPSKKFTCQG). Disulfide bonds link Cys-863/Cys-886, Cys-865/Cys-907, Cys-922/Cys-933, Cys-927/Cys-943, Cys-945/Cys-954, Cys-961/Cys-972, Cys-966/Cys-984, Cys-986/Cys-995, Cys-1002/Cys-1013, Cys-1007/Cys-1022, Cys-1024/Cys-1033, Cys-1040/Cys-1053, Cys-1047/Cys-1062, Cys-1064/Cys-1073, Cys-1080/Cys-1091, Cys-1085/Cys-1100, Cys-1102/Cys-1111, Cys-1125/Cys-1136, Cys-1130/Cys-1145, and Cys-1147/Cys-1156. 2 EGF-like domains span residues 918–955 (KCNPCLSNPCKNDGTCNSDPVDFYRCTCPYGFKGQDCD) and 957–996 (PIHACISNPCKHGGTCHLKEGEEDGFWCICADGFEGENCE). An EGF-like 3; calcium-binding domain is found at 998–1034 (NVDDCEDNDCENNSTCVDGINNYTCLCPPEYTGELCE). N-linked (GlcNAc...) asparagine glycosylation is found at Asn-1009, Asn-1010, and Asn-1019. Residues 1036–1074 (KLDFCAQDLNPCQHDSKCILTPKGFKCDCTPGYVGEHCD) enclose the EGF-like 4 domain. Positions 1076–1112 (DFDDCQDNKCKNGAHCTDAVNGYTCICPEGYSGLFCE) constitute an EGF-like 5; calcium-binding domain. In terms of domain architecture, EGF-like 6 spans 1121 to 1157 (RTSPCDNFDCQNGAQCIVRINEPICQCLPGYQGEKCE). In terms of domain architecture, Laminin G-like spans 1160–1333 (VSVNFINKES…PMQTGILPGC (174 aa)). Asn-1183, Asn-1266, and Asn-1300 each carry an N-linked (GlcNAc...) asparagine glycan. 14 disulfide bridges follow: Cys-1307–Cys-1333, Cys-1336–Cys-1346, Cys-1341–Cys-1356, Cys-1358–Cys-1367, Cys-1375–Cys-1385, Cys-1380–Cys-1395, Cys-1397–Cys-1406, Cys-1416–Cys-1426, Cys-1421–Cys-1436, Cys-1438–Cys-1447, Cys-1453–Cys-1492, Cys-1471–Cys-1506, Cys-1482–Cys-1522, and Cys-1486–Cys-1524. Residues 1332–1368 (GCEPCHKKVCAHGTCQPSSQAGFTCECQEGWMGPLCD) enclose the EGF-like 7 domain. The region spanning 1453 to 1528 (CRGERIRDYY…VVKCGCTRCV (76 aa)) is the CTCK domain.

Interacts with GREM1. Homodimer. Binds ROBO1 and ROBO2 with high affinity. In terms of tissue distribution, fetal lung and kidney, and adult spinal cord. Weak expression in adult adrenal gland, thyroid, trachea and other tissues examined.

It localises to the secreted. Its function is as follows. Thought to act as molecular guidance cue in cellular migration, and function appears to be mediated by interaction with roundabout homolog receptors. During neural development involved in axonal navigation at the ventral midline of the neural tube and projection of axons to different regions. SLIT1 and SLIT2 seem to be essential for midline guidance in the forebrain by acting as repulsive signal preventing inappropriate midline crossing by axons projecting from the olfactory bulb. In spinal cord development may play a role in guiding commissural axons once they reached the floor plate by modulating the response to netrin. In vitro, silences the attractive effect of NTN1 but not its growth-stimulatory effect and silencing requires the formation of a ROBO1-DCC complex. May be implicated in spinal cord midline post-crossing axon repulsion. In vitro, only commissural axons that crossed the midline responded to SLIT2. In the developing visual system appears to function as repellent for retinal ganglion axons by providing a repulsion that directs these axons along their appropriate paths prior to, and after passage through, the optic chiasm. In vitro, collapses and repels retinal ganglion cell growth cones. Seems to play a role in branching and arborization of CNS sensory axons, and in neuronal cell migration. In vitro, Slit homolog 2 protein N-product, but not Slit homolog 2 protein C-product, repels olfactory bulb (OB) but not dorsal root ganglia (DRG) axons, induces OB growth cones collapse and induces branching of DRG axons. Seems to be involved in regulating leukocyte migration. This is Slit homolog 2 protein (SLIT2) from Homo sapiens (Human).